A 154-amino-acid polypeptide reads, in one-letter code: Large ribosomal subunit protein uL23y (154 aa).

This sequence belongs to the universal ribosomal protein uL23 family.

In terms of biological role, binds to a specific region on the 26S rRNA. The polypeptide is Large ribosomal subunit protein uL23y (RPL23AB) (Arabidopsis thaliana (Mouse-ear cress)).